The chain runs to 492 residues: 5-taurinomethyluridine-[tRNA] synthase subunit GTPB3, mitochondrial (492 aa).

The transit peptide at 1-20 (MWRGLSALVTQAAWAPLRLC) directs the protein to the mitochondrion. 3 residues coordinate 5,10-methylenetetrahydrofolate: Arg-52, Glu-112, and Lys-152. The TrmE-type G domain maps to 249 to 416 (GANVVVTGPP…LLQALKTELA (168 aa)). GTP is bound by residues 256 to 263 (GPPNAGKS), 282 to 286 (GTTRD), 303 to 306 (DTAG), and 374 to 377 (NKSD). Asn-259 is a binding site for K(+). Residues Ser-263 and Thr-284 each contribute to the Mg(2+) site. Position 492 (Lys-492) interacts with 5,10-methylenetetrahydrofolate.

It belongs to the TRAFAC class TrmE-Era-EngA-EngB-Septin-like GTPase superfamily. TrmE GTPase family. Homodimer; forms a dimer in the presence of potassium. Interacts with MTO1; forms the GTPBP3-MTO1 complex composed of homodimers of GTPBP3 and MTO1. It depends on K(+) as a cofactor. Ubiquitously expressed. Highly expressed in tissues with high metabolic rates including heart, liver and brain. Weakly expressed in skeletal muscle.

It is found in the mitochondrion. The enzyme catalyses GTP + H2O = GDP + phosphate + H(+). GTPase component of the GTPBP3-MTO1 complex that catalyzes the 5-taurinomethyluridine (taum(5)U) modification at the 34th wobble position (U34) of mitochondrial tRNAs (mt-tRNAs), which plays a role in mt-tRNA decoding and mitochondrial translation. Taum(5)U formation on mammalian mt-tRNA requires the presence of both GTPBP3-mediated GTPase activity and MTO1 catalytic activity. This is 5-taurinomethyluridine-[tRNA] synthase subunit GTPB3, mitochondrial from Mus musculus (Mouse).